A 960-amino-acid polypeptide reads, in one-letter code: Gamma-aminobutyric acid type B receptor subunit 1 (960 aa).

A signal peptide spans 1–19 (MLLLLLVPLFLRPLGAGGA). At 20–590 (QTPNVTSEGC…KTFRFLSQKL (571 aa)) the chain is on the extracellular side. 2 N-linked (GlcNAc...) asparagine glycosylation sites follow: Asn-23 and Asn-83. Sushi domains follow at residues 29-95 (CQII…PSRC) and 97-158 (RICS…HCQV). 3 disulfides stabilise this stretch: Cys-99–Cys-144, Cys-130–Cys-156, and Cys-219–Cys-245. Ser-246, Ser-269, His-286, and Tyr-366 together coordinate 4-aminobutanoate. A disulfide bond links Cys-375 and Cys-409. N-linked (GlcNAc...) asparagine glycosylation is found at Asn-408 and Asn-439. Glu-465 contributes to the 4-aminobutanoate binding site. Asn-481, Asn-501, and Asn-513 each carry an N-linked (GlcNAc...) asparagine glycan. The helical transmembrane segment at 591-611 (FISVSVLSSLGIVLAVVCLSF) threads the bilayer. The Cytoplasmic portion of the chain corresponds to 612 to 630 (NIYNSHVRYIQNSQPNLNN). The chain crosses the membrane as a helical span at residues 631–651 (LTAVGCSLALAAVFPLGLDGY). At 652–666 (HIGRSQFPFVCQARL) the chain is on the extracellular side. Residues 667–687 (WLLGLGFSLGYGSMFTKIWWV) form a helical membrane-spanning segment. The Cytoplasmic portion of the chain corresponds to 688–709 (HTVFTKKEEKKEWRKTLEPWKL). Residues 710–730 (YATVGLLVGMDILTLAIWQIV) form a helical membrane-spanning segment. Residues 731–767 (DPLHRTIETFAKEEPKEDIDVSILPQLEHCSSKKMNT) are Extracellular-facing. Residues 768 to 788 (WLGIFYGYKGLLLLLGIFLAY) form a helical membrane-spanning segment. The Cytoplasmic portion of the chain corresponds to 789-803 (ETKSVSTEKINDHRA). A helical transmembrane segment spans residues 804-824 (VGMAIYNVAVLCLITAPVTMI). The Extracellular portion of the chain corresponds to 825–832 (LSSQQDAA). Residues 833 to 853 (FAFASLAIVFSSYITLVVLFV) form a helical membrane-spanning segment. Residues 854–960 (PKMRRLITRG…DGSRVHLLYK (107 aa)) are Cytoplasmic-facing. 2 disordered regions span residues 866–891 (QSEA…RLLE) and 908–960 (VSEL…LLYK). Positions 867–879 (SEAQDTMKTGSST) are enriched in polar residues. Residues 868–924 (EAQDTMKTGSSTNNNEEEKSRLLEKENRELEKIIAEKEERVSELRHQLQSRQQIRSR) are a coiled coil. Thr-872 is subject to Phosphothreonine. The interval 887–915 (SRLLEKENRELEKIIAEKEERVSELRHQL) is interaction with ATF4. Position 929 is a phosphothreonine (Thr-929).

It belongs to the G-protein coupled receptor 3 family. GABA-B receptor subfamily. As to quaternary structure, heterodimer of GABBR1 and GABBR2. Homodimers may form, but are inactive. Interacts (via C-terminus) with ATF4 (via leucine zipper domain). Interacts with JAKMIP1. Interacts with KCTD8, KCTD12, KCTD12B and KCTD16; this interaction determines the pharmacology and kinetics of the receptor response, the KCTD proteins markedly accelerating the GABA-B response, although to different extents. As to expression, expressed in neuronal tissue including cortex, cerebellum and spinal cord. Not detected in non-neuronal tissues including heart, liver, spleen and kidney.

Its subcellular location is the cell membrane. It localises to the postsynaptic cell membrane. The protein localises to the cell projection. It is found in the dendrite. In terms of biological role, component of a heterodimeric G-protein coupled receptor for GABA, formed by GABBR1 and GABBR2. Within the heterodimeric GABA receptor, only GABBR1 seems to bind agonists, while GABBR2 mediates coupling to G proteins. Ligand binding causes a conformation change that triggers signaling via guanine nucleotide-binding proteins (G proteins) and modulates the activity of down-stream effectors, such as adenylate cyclase. Signaling inhibits adenylate cyclase, stimulates phospholipase A2, activates potassium channels, inactivates voltage-dependent calcium-channels and modulates inositol phospholipid hydrolysis. Calcium is required for high affinity binding to GABA. Plays a critical role in the fine-tuning of inhibitory synaptic transmission. Pre-synaptic GABA receptor inhibits neurotransmitter release by down-regulating high-voltage activated calcium channels, whereas postsynaptic GABA receptor decreases neuronal excitability by activating a prominent inwardly rectifying potassium (Kir) conductance that underlies the late inhibitory postsynaptic potentials. Not only implicated in synaptic inhibition but also in hippocampal long-term potentiation, slow wave sleep, muscle relaxation and antinociception. This is Gamma-aminobutyric acid type B receptor subunit 1 (Gabbr1) from Mus musculus (Mouse).